The primary structure comprises 382 residues: MGIKGLNAIISEHVPSAIRKSDIKSFFGRKVAIDASMSLYQFLIAVRQQDGGQLTNEAGETTSHLMGMFYRTLRMIDNGIKPCYVFDGKPPDLKSHELTKRSSRRVETEKKLAEATTELEKMKQERRLVKVSKEHNEEAQKLLGLMGIPYIIAPTEAEAQCAELAKKGKVYAAASEDMDTLCYRTPFLLRHLTFSEAKKEPIHEIDTELVLRGLDLTIEQFVDLCIMLGCDYCESIRGVGPVTALKLIKTHGSIEKIVEFIESGESNNTKWKIPEDWPYKQARMLFLDPEVIDGNEINLKWSPPKEKELIEYLCDDKKFSEERVKSGISRLKKGLKSGIQGRLDGFFQVVPKTKEQLAAAAKRAQENKKLNKNKNKVTKGRR.

The tract at residues 1-105 (MGIKGLNAII…HELTKRSSRR (105 aa)) is N-domain. Asp34 serves as a coordination point for Mg(2+). 2 residues coordinate DNA: Arg47 and Arg71. Positions 87, 156, 158, 177, and 179 each coordinate Mg(2+). The I-domain stretch occupies residues 120–251 (EKMKQERRLV…VTALKLIKTH (132 aa)). Residue Glu156 participates in DNA binding. DNA is bound by residues Gly229 and Asp231. Position 231 (Asp231) interacts with Mg(2+). The interval 339–347 (IQGRLDGFF) is interaction with PCNA. The segment at 358–382 (AAAAKRAQENKKLNKNKNKVTKGRR) is disordered. Residues 370–382 (LNKNKNKVTKGRR) are compositionally biased toward basic residues.

Belongs to the XPG/RAD2 endonuclease family. FEN1 subfamily. Interacts with PCNA. Three molecules of RAD27 bind to one PCNA trimer with each molecule binding to one PCNA monomer. PCNA stimulates the nuclease activity without altering cleavage specificity. The cofactor is Mg(2+). Post-translationally, phosphorylated. Phosphorylation upon DNA damage induces relocalization to the nuclear plasma.

The protein localises to the nucleus. Its subcellular location is the nucleolus. The protein resides in the nucleoplasm. It localises to the mitochondrion. In terms of biological role, structure-specific nuclease with 5'-flap endonuclease and 5'-3' exonuclease activities involved in DNA replication and repair. During DNA replication, cleaves the 5'-overhanging flap structure that is generated by displacement synthesis when DNA polymerase encounters the 5'-end of a downstream Okazaki fragment. It enters the flap from the 5'-end and then tracks to cleave the flap base, leaving a nick for ligation. Also involved in the long patch base excision repair (LP-BER) pathway, by cleaving within the apurinic/apyrimidinic (AP) site-terminated flap. Acts as a genome stabilization factor that prevents flaps from equilibrating into structures that lead to duplications and deletions. Also possesses 5'-3' exonuclease activity on nicked or gapped double-stranded DNA, and exhibits RNase H activity. Also involved in replication and repair of rDNA and in repairing mitochondrial DNA. The polypeptide is Flap endonuclease 1 (Saccharomyces cerevisiae (strain YJM789) (Baker's yeast)).